A 145-amino-acid chain; its full sequence is Protein ImpA (145 aa).

Catalysis depends on for autocatalytic cleavage activity residues Ser-64 and Lys-101.

It belongs to the peptidase S24 family.

Involved in UV protection and mutation. The sequence is that of Protein ImpA from Escherichia coli.